The primary structure comprises 420 residues: Glutamyl-tRNA reductase (420 aa).

Residues 49-52 (TCNR), Ser-109, 114-116 (EPQ), and Gln-120 contribute to the substrate site. Cys-50 functions as the Nucleophile in the catalytic mechanism. 189–194 (GAGETI) lines the NADP(+) pocket.

Belongs to the glutamyl-tRNA reductase family. As to quaternary structure, homodimer.

The enzyme catalyses (S)-4-amino-5-oxopentanoate + tRNA(Glu) + NADP(+) = L-glutamyl-tRNA(Glu) + NADPH + H(+). It participates in porphyrin-containing compound metabolism; protoporphyrin-IX biosynthesis; 5-aminolevulinate from L-glutamyl-tRNA(Glu): step 1/2. Its function is as follows. Catalyzes the NADPH-dependent reduction of glutamyl-tRNA(Glu) to glutamate 1-semialdehyde (GSA). In Serratia proteamaculans (strain 568), this protein is Glutamyl-tRNA reductase.